Here is a 133-residue protein sequence, read N- to C-terminus: Ribonuclease P protein component (133 aa).

It belongs to the RnpA family. As to quaternary structure, consists of a catalytic RNA component (M1 or rnpB) and a protein subunit.

The enzyme catalyses Endonucleolytic cleavage of RNA, removing 5'-extranucleotides from tRNA precursor.. RNaseP catalyzes the removal of the 5'-leader sequence from pre-tRNA to produce the mature 5'-terminus. It can also cleave other RNA substrates such as 4.5S RNA. The protein component plays an auxiliary but essential role in vivo by binding to the 5'-leader sequence and broadening the substrate specificity of the ribozyme. This chain is Ribonuclease P protein component, found in Synechococcus sp. (strain JA-2-3B'a(2-13)) (Cyanobacteria bacterium Yellowstone B-Prime).